Here is a 734-residue protein sequence, read N- to C-terminus: Protein SKG6 (734 aa).

Positions 30–68 are disordered; sequence TRRDDSDSSSSSASSTKNSKSAECTGSKQQCQLPTDSSH. A compositionally biased stretch (low complexity) spans 37–51; it reads SSSSSASSTKNSKSA. The span at 53 to 68 shows a compositional bias: polar residues; the sequence is CTGSKQQCQLPTDSSH. The chain crosses the membrane as a helical span at residues 72-96; sequence VTVGVAVAVPVGVIIIVLAVILCIV. A Phosphoserine modification is found at Ser-137. Thr-169 is modified (phosphothreonine). Residues Ser-191, Ser-193, and Ser-219 each carry the phosphoserine modification. Thr-221 is modified (phosphothreonine). Phosphoserine occurs at positions 222 and 251. Residues 239-327 form a disordered region; it reads RFQESESFRS…LRFGKDDDNY (89 aa). Polar residues predominate over residues 253–273; it reads IHNNQLSRGSATEGANKQFTF. Residues 280–299 are compositionally biased toward low complexity; it reads SSSVSEEAEVLNESNESASN. Positions 309-327 are enriched in basic and acidic residues; sequence SSEKTHERNLRFGKDDDNY. Ser-369 bears the Phosphoserine mark. The tract at residues 647–671 is disordered; it reads DLTAKPSYKPAGSFRSVSATNSRNN. Polar residues predominate over residues 661–671; that stretch reads RSVSATNSRNN. A phosphoserine mark is found at Ser-672 and Ser-717. Positions 707-734 are disordered; sequence SVGGILPHSGSQDDLRKQLGSSHNYTVN. Residues 725–734 are compositionally biased toward polar residues; sequence LGSSHNYTVN.

Belongs to the SKG6/TOS2 family. Interacts with ZDS1 and ZDS2. In terms of processing, phosphorylated by CDC28.

The protein resides in the membrane. May be involved in the polarity establishment process. Suppresses the lethality of KEX2-GAS1 double null mutant when overexpressed. This chain is Protein SKG6 (SKG6), found in Saccharomyces cerevisiae (strain ATCC 204508 / S288c) (Baker's yeast).